Here is a 481-residue protein sequence, read N- to C-terminus: Phototropic-responsive NPH3 family protein NPY4 (481 aa).

Residues threonine 29 to alanine 102 form the BTB domain. Residues aspartate 207–arginine 450 enclose the NPH3 domain. Tyrosine 391 carries the phosphotyrosine modification. Positions threonine 456–phenylalanine 481 are disordered. Over residues threonine 460–asparagine 469 the composition is skewed to low complexity.

Belongs to the NPH3 family. Expressed in the hypocotyl cells that would differentiate into vascular bundles. Highly expressed in primary root tips and radicles.

Its subcellular location is the cell membrane. It localises to the cytoplasm. The protein resides in the cytosol. It functions in the pathway protein modification; protein ubiquitination. In terms of biological role, may act as a substrate-specific adapter of an E3 ubiquitin-protein ligase complex (CUL3-RBX1-BTB) which mediates the ubiquitination and subsequent proteasomal degradation of target proteins. Plays an essential role in auxin-mediated organogenesis and in root gravitropic responses through the control of PIN proteins (e.g. PIN1 and PIN2) polarity in the root tip endodermal cell layer and in shoot epidermis. Recruited to the plasma membrane by PINs (e.g. PIN1 and PIN2) and, in concert with AGC kinases-mediated (e.g. D6PK and PID) PINs phosphorylation, maintains their polarity through limiting lateral diffusion-based escape. This is Phototropic-responsive NPH3 family protein NPY4 from Arabidopsis thaliana (Mouse-ear cress).